The following is a 146-amino-acid chain: Hemoglobin subunit beta (146 aa).

A Globin domain is found at 2–146 (QWTAEEKQLI…VAHALARKYH (145 aa)). Heme b-binding residues include H63 and H92.

This sequence belongs to the globin family. As to quaternary structure, heterotetramer of two alpha chains and two beta chains. Red blood cells.

Its function is as follows. Involved in oxygen transport from the lung to the various peripheral tissues. The chain is Hemoglobin subunit beta (HBB) from Rhea americana (Greater rhea).